The primary structure comprises 477 residues: Calcium/calmodulin-dependent protein kinase type 1G (477 aa).

The region spanning 23 to 277 is the Protein kinase domain; sequence FIFMEVLGSG…CEKALRHPWI (255 aa). ATP is bound by residues 29–37 and K52; that span reads LGSGAFSEV. D143 serves as the catalytic Proton acceptor. An autoinhibitory domain region spans residues 277–317; that stretch reads IDGNTALHRDIYPSVSLQIQKNFAKSKWRQAFNAAAVVHHM. Positions 297-318 are calmodulin-binding; it reads KNFAKSKWRQAFNAAAVVHHMR. A disordered region spans residues 326 to 388; it reads SPSVRQEVEN…SRPSAPSGGR (63 aa). The span at 376 to 388 shows a compositional bias: low complexity; the sequence is SHSSRPSAPSGGR.

It belongs to the protein kinase superfamily. CAMK Ser/Thr protein kinase family. CaMK subfamily. In terms of processing, may be prenylated on Cys-474. Highly expressed in brain, in neuronal cell bodies of the central nucleus of amygdala and ventromedial hypothalamic nucleus. Also detected in heart, testis, and kidney.

It is found in the cytoplasm. It localises to the golgi apparatus membrane. The protein resides in the cell membrane. It carries out the reaction L-seryl-[protein] + ATP = O-phospho-L-seryl-[protein] + ADP + H(+). It catalyses the reaction L-threonyl-[protein] + ATP = O-phospho-L-threonyl-[protein] + ADP + H(+). With respect to regulation, activated by Ca(2+)/calmodulin. Binding of calmodulin is thought to result in a conformational change and leads to activation through phosphorylation by CAMKK1. Calcium/calmodulin-dependent protein kinase belonging to a proposed calcium-triggered signaling cascade. In vitro phosphorylates transcription factor CREB1. The chain is Calcium/calmodulin-dependent protein kinase type 1G (Camk1g) from Mus musculus (Mouse).